A 213-amino-acid polypeptide reads, in one-letter code: Uracil phosphoribosyltransferase (213 aa).

5-phospho-alpha-D-ribose 1-diphosphate-binding positions include Arg78, Arg103, and Asp131–Thr139. Uracil contacts are provided by residues Ile197 and Gly202–Ala204. Asp203 serves as a coordination point for 5-phospho-alpha-D-ribose 1-diphosphate.

It belongs to the UPRTase family. Requires Mg(2+) as cofactor.

It catalyses the reaction UMP + diphosphate = 5-phospho-alpha-D-ribose 1-diphosphate + uracil. Its pathway is pyrimidine metabolism; UMP biosynthesis via salvage pathway; UMP from uracil: step 1/1. Allosterically activated by GTP. Catalyzes the conversion of uracil and 5-phospho-alpha-D-ribose 1-diphosphate (PRPP) to UMP and diphosphate. The sequence is that of Uracil phosphoribosyltransferase from Bifidobacterium longum subsp. infantis (strain ATCC 15697 / DSM 20088 / JCM 1222 / NCTC 11817 / S12).